The following is a 143-amino-acid chain: Turripeptide VIII-01 (143 aa).

The N-terminal stretch at 1–23 is a signal peptide; sequence MALSLDILMSVTMVTAVLTTVNA. Residues 24–32 constitute a propeptide that is removed on maturation; the sequence is EYKDSRLDS.

Post-translationally, contains 4 disulfide bonds. As to expression, expressed by the venom duct.

The protein resides in the secreted. In Gemmula speciosa (Splendid gem-turris), this protein is Turripeptide VIII-01.